Reading from the N-terminus, the 95-residue chain is Large ribosomal subunit protein bL28 (95 aa).

It belongs to the bacterial ribosomal protein bL28 family.

This Orientia tsutsugamushi (strain Ikeda) (Rickettsia tsutsugamushi) protein is Large ribosomal subunit protein bL28.